Consider the following 347-residue polypeptide: Phosphoribosylformylglycinamidine cyclo-ligase (347 aa).

The protein belongs to the AIR synthase family.

It is found in the cytoplasm. It catalyses the reaction 2-formamido-N(1)-(5-O-phospho-beta-D-ribosyl)acetamidine + ATP = 5-amino-1-(5-phospho-beta-D-ribosyl)imidazole + ADP + phosphate + H(+). The protein operates within purine metabolism; IMP biosynthesis via de novo pathway; 5-amino-1-(5-phospho-D-ribosyl)imidazole from N(2)-formyl-N(1)-(5-phospho-D-ribosyl)glycinamide: step 2/2. The sequence is that of Phosphoribosylformylglycinamidine cyclo-ligase from Alcanivorax borkumensis (strain ATCC 700651 / DSM 11573 / NCIMB 13689 / SK2).